A 314-amino-acid chain; its full sequence is Glutathione synthetase (314 aa).

In terms of domain architecture, ATP-grasp spans 125–311 (EKLAAQLFPQ…IAGQLFDAIE (187 aa)). 151–208 (FVQKQEQAILKPLDGMGGHSIFRSSNGDPNLNVILETLTDGGRTLAIAQRYLQQIIEG) contacts ATP. The Mg(2+) site is built by Glu282 and Asn284.

The protein belongs to the prokaryotic GSH synthase family. Mg(2+) is required as a cofactor. It depends on Mn(2+) as a cofactor.

The enzyme catalyses gamma-L-glutamyl-L-cysteine + glycine + ATP = glutathione + ADP + phosphate + H(+). It functions in the pathway sulfur metabolism; glutathione biosynthesis; glutathione from L-cysteine and L-glutamate: step 2/2. In Xylella fastidiosa (strain 9a5c), this protein is Glutathione synthetase.